The sequence spans 182 residues: Photosystem I assembly protein Ycf4 (182 aa).

2 helical membrane-spanning segments follow: residues 22–42 and 63–83; these read WSSVIFLGASGFLLTGLSSYL and VMCFYGILGLIFSVYLGLTIF.

It belongs to the Ycf4 family.

The protein resides in the plastid. Its subcellular location is the chloroplast thylakoid membrane. Its function is as follows. Seems to be required for the assembly of the photosystem I complex. The protein is Photosystem I assembly protein Ycf4 of Oltmannsiellopsis viridis (Marine flagellate).